A 352-amino-acid polypeptide reads, in one-letter code: Ion-translocating oxidoreductase complex subunit D (352 aa).

5 consecutive transmembrane segments (helical) span residues 20–40 (IMLL…RFFG), 42–62 (GTLV…ALVL), 78–109 (ALLT…VIIA), 123–143 (PAMI…TSWL), and 148–168 (IAVN…GHTA). An FMN phosphoryl threonine modification is found at Thr187. The next 4 helical transmembrane spans lie at 214-234 (ILAG…GVWL), 242-262 (WHIP…GWLF), 267-287 (LAAP…FFIL), and 301-318 (LMFG…RSFG).

The protein belongs to the NqrB/RnfD family. In terms of assembly, the complex is composed of six subunits: RsxA, RsxB, RsxC, RsxD, RsxE and RsxG. Requires FMN as cofactor.

The protein resides in the cell inner membrane. Part of a membrane-bound complex that couples electron transfer with translocation of ions across the membrane. Required to maintain the reduced state of SoxR. In Shigella flexneri, this protein is Ion-translocating oxidoreductase complex subunit D.